A 439-amino-acid chain; its full sequence is tRNA(Ile)-lysidine synthase (439 aa).

25-30 lines the ATP pocket; that stretch reads SGGLDS.

It belongs to the tRNA(Ile)-lysidine synthase family.

The protein localises to the cytoplasm. The catalysed reaction is cytidine(34) in tRNA(Ile2) + L-lysine + ATP = lysidine(34) in tRNA(Ile2) + AMP + diphosphate + H(+). Functionally, ligates lysine onto the cytidine present at position 34 of the AUA codon-specific tRNA(Ile) that contains the anticodon CAU, in an ATP-dependent manner. Cytidine is converted to lysidine, thus changing the amino acid specificity of the tRNA from methionine to isoleucine. In Edwardsiella ictaluri (strain 93-146), this protein is tRNA(Ile)-lysidine synthase.